The chain runs to 426 residues: Enolase (426 aa).

The interval 32-53 (TGRAAVPSGASTGAYEAHEQRD) is disordered. Gln163 provides a ligand contact to (2R)-2-phosphoglycerate. The Proton donor role is filled by Glu205. Residues Asp242, Glu285, and Asp312 each coordinate Mg(2+). (2R)-2-phosphoglycerate is bound by residues Lys337, Arg366, Ser367, and Lys388. Lys337 acts as the Proton acceptor in catalysis.

Belongs to the enolase family. It depends on Mg(2+) as a cofactor.

It localises to the cytoplasm. It is found in the secreted. Its subcellular location is the cell surface. It catalyses the reaction (2R)-2-phosphoglycerate = phosphoenolpyruvate + H2O. Its pathway is carbohydrate degradation; glycolysis; pyruvate from D-glyceraldehyde 3-phosphate: step 4/5. In terms of biological role, catalyzes the reversible conversion of 2-phosphoglycerate (2-PG) into phosphoenolpyruvate (PEP). It is essential for the degradation of carbohydrates via glycolysis. The protein is Enolase of Hyphomonas neptunium (strain ATCC 15444).